A 565-amino-acid chain; its full sequence is uncharacterized protein (565 aa).

Transmembrane regions (helical) follow at residues 8–28 (ISFI…GIFF), 43–63 (LAIF…LALI), 95–115 (MTYL…ICSI), 137–157 (WLIW…IPPL), 167–187 (MVVS…GFIV), 227–247 (FTGI…FFAY), 268–288 (WALF…AVAL), 314–334 (IVFG…INGF), 367–387 (VVGV…FTVI), 424–444 (ATWT…GAIV), 460–480 (FLPA…VTII), 482–502 (PFIN…TVLG), and 516–536 (VMLI…VYVE).

This sequence to M.pneumoniae MPN_095 and MPN_096.

The protein resides in the cell membrane. This is an uncharacterized protein from Mycoplasma pneumoniae (strain ATCC 29342 / M129 / Subtype 1) (Mycoplasmoides pneumoniae).